Consider the following 144-residue polypeptide: uncharacterized protein (144 aa).

Transmembrane regions (helical) follow at residues 10–30 and 60–80; these read ILTR…GLGP and YVFL…AIAV.

The protein localises to the membrane. This is an uncharacterized protein from Saccharomyces cerevisiae (strain ATCC 204508 / S288c) (Baker's yeast).